We begin with the raw amino-acid sequence, 172 residues long: UPF0316 protein Clos_0555 (172 aa).

3 consecutive transmembrane segments (helical) span residues 3–23, 34–54, and 61–81; these read ALLG…MATI, VIAA…IGKV, and PLNV…GIFL.

Belongs to the UPF0316 family.

It localises to the cell membrane. The sequence is that of UPF0316 protein Clos_0555 from Alkaliphilus oremlandii (strain OhILAs) (Clostridium oremlandii (strain OhILAs)).